Here is a 201-residue protein sequence, read N- to C-terminus: HTH-type transcriptional regulator Hpr (201 aa).

Positions 13 to 157 (AMLFSQRIAQ…MMCIIRNIYG (145 aa)) constitute an HTH marR-type domain. Positions 63–86 (ISEIAKFGVMHVSTAFNFSKKLEE) form a DNA-binding region, H-T-H motif.

As to quaternary structure, homodimer.

Negative regulator of protease production and sporulation. This chain is HTH-type transcriptional regulator Hpr, found in Geobacillus sp. (strain WCH70).